Consider the following 464-residue polypeptide: Cysteine--tRNA ligase (464 aa).

C32 provides a ligand contact to Zn(2+). Residues 34 to 44 (VTVYDDCHIGH) carry the 'HIGH' region motif. Positions 213, 238, and 242 each coordinate Zn(2+). The 'KMSKS' region signature appears at 270–274 (KMSKS). An ATP-binding site is contributed by K273.

This sequence belongs to the class-I aminoacyl-tRNA synthetase family. In terms of assembly, monomer. Zn(2+) is required as a cofactor.

It is found in the cytoplasm. It carries out the reaction tRNA(Cys) + L-cysteine + ATP = L-cysteinyl-tRNA(Cys) + AMP + diphosphate. The protein is Cysteine--tRNA ligase of Francisella tularensis subsp. tularensis (strain SCHU S4 / Schu 4).